The sequence spans 540 residues: Chaperonin GroEL 2 (540 aa).

ATP contacts are provided by residues 29 to 32, 86 to 90, Gly-413, 476 to 478, and Asp-492; these read TLGP, DGTTT, and NAA.

It belongs to the chaperonin (HSP60) family. In terms of assembly, forms a cylinder of 14 subunits composed of two heptameric rings stacked back-to-back. Interacts with the co-chaperonin GroES.

Its subcellular location is the cytoplasm. It catalyses the reaction ATP + H2O + a folded polypeptide = ADP + phosphate + an unfolded polypeptide.. Together with its co-chaperonin GroES, plays an essential role in assisting protein folding. The GroEL-GroES system forms a nano-cage that allows encapsulation of the non-native substrate proteins and provides a physical environment optimized to promote and accelerate protein folding. The polypeptide is Chaperonin GroEL 2 (Streptomyces albus G).